A 261-amino-acid chain; its full sequence is Non-structural protein 2a (261 aa).

Belongs to the coronaviruses ns2a protein family.

The protein resides in the host cytoplasm. Functionally, not essential for virus replication in transformed murine cells. This Mus musculus (Mouse) protein is Non-structural protein 2a.